The sequence spans 539 residues: Hydroxylamine reductase (539 aa).

Residues cysteine 3, cysteine 6, cysteine 15, and cysteine 21 each coordinate [4Fe-4S] cluster. Hybrid [4Fe-2O-2S] cluster is bound by residues histidine 235, glutamate 259, cysteine 303, cysteine 394, cysteine 422, cysteine 447, glutamate 482, and lysine 484. Cysteine 394 carries the post-translational modification Cysteine persulfide.

It belongs to the HCP family. Requires [4Fe-4S] cluster as cofactor. The cofactor is hybrid [4Fe-2O-2S] cluster.

The protein resides in the cytoplasm. The catalysed reaction is A + NH4(+) + H2O = hydroxylamine + AH2 + H(+). Catalyzes the reduction of hydroxylamine to form NH(3) and H(2)O. The polypeptide is Hydroxylamine reductase (Methanocaldococcus jannaschii (strain ATCC 43067 / DSM 2661 / JAL-1 / JCM 10045 / NBRC 100440) (Methanococcus jannaschii)).